A 130-amino-acid polypeptide reads, in one-letter code: Small ribosomal subunit protein uS9 (130 aa).

This sequence belongs to the universal ribosomal protein uS9 family.

This chain is Small ribosomal subunit protein uS9, found in Salmonella paratyphi A (strain AKU_12601).